The chain runs to 82 residues: Omega-conotoxin-like TxO6 (82 aa).

Positions 1-22 (MKLTCVVIVAVLFLTAWTLVMA) are cleaved as a signal peptide. Residues 23–50 (DDSNNGLANLFSKSRDEMEDPEAAKLEK) constitute a propeptide that is removed on maturation. 3 disulfides stabilise this stretch: Cys53–Cys71, Cys60–Cys76, and Cys70–Cys81.

It belongs to the conotoxin O1 superfamily. Expressed by the venom duct.

It is found in the secreted. Its function is as follows. Omega-conotoxins act at presynaptic membranes, they bind and block voltage-gated calcium channels (Cav). The sequence is that of Omega-conotoxin-like TxO6 from Conus textile (Cloth-of-gold cone).